The chain runs to 157 residues: 2-C-methyl-D-erythritol 2,4-cyclodiphosphate synthase (157 aa).

Residues Asp-8 and His-10 each contribute to the a divalent metal cation site. 4-CDP-2-C-methyl-D-erythritol 2-phosphate is bound by residues 8-10 (DVH) and 34-35 (HS). His-42 contributes to the a divalent metal cation binding site. Residues 56–58 (DLG), 61–65 (FPDTD), 132–135 (TTTE), Phe-139, and Arg-142 each bind 4-CDP-2-C-methyl-D-erythritol 2-phosphate.

It belongs to the IspF family. As to quaternary structure, homotrimer. It depends on a divalent metal cation as a cofactor.

It catalyses the reaction 4-CDP-2-C-methyl-D-erythritol 2-phosphate = 2-C-methyl-D-erythritol 2,4-cyclic diphosphate + CMP. It functions in the pathway isoprenoid biosynthesis; isopentenyl diphosphate biosynthesis via DXP pathway; isopentenyl diphosphate from 1-deoxy-D-xylulose 5-phosphate: step 4/6. Involved in the biosynthesis of isopentenyl diphosphate (IPP) and dimethylallyl diphosphate (DMAPP), two major building blocks of isoprenoid compounds. Catalyzes the conversion of 4-diphosphocytidyl-2-C-methyl-D-erythritol 2-phosphate (CDP-ME2P) to 2-C-methyl-D-erythritol 2,4-cyclodiphosphate (ME-CPP) with a corresponding release of cytidine 5-monophosphate (CMP). The protein is 2-C-methyl-D-erythritol 2,4-cyclodiphosphate synthase of Salinibacter ruber (strain DSM 13855 / M31).